Consider the following 530-residue polypeptide: MNATAQALVLPFITQVTRAVSLSENVKVLGGIPFAEDGTYLEWLSILGFTIGCYYVIYTFYALCFHPLRKYPGPWHLAVSNIPNRWSTISGNSSYWLYDLHEKYGPIVRVAPNEISYSDPQAWQDIYGPQPNQRLGMPKDPKFFSSFEDKKTAASIITSQPKDYMRMRHIYSYGFSKQVMLAKEEMIQGIIDRAMEALRQTKQQPQDIVQIFRATDFSIVTEIVFGKAYHIFDRPTYQPWFKSLMGWIRSTAVITATTDYPLGKLAAWLLTPRSVLKQRNVYLKYVNGEIEERIGESNAGRKDVVQLMFETTDQPKLAESDIRANLPFMVIAASETTTTLMSGMIAHLLNSPDALSQLTAEVRGRFRSPSDITIATVNNLPFLNACVNEALRVYPAAPTQLPRVVPGEGATVCNRWVPGGTKVYVAPYATFRSAENFYQPDAFLPQRWLPENGESFDVDKKNAWRPFGLGAHECPGQVITNLITRLIMCKLLLSFDLELCADSQDWLSRQPVWIVWDKPELLIKARPAAA.

Asn2 is a glycosylation site (N-linked (GlcNAc...) asparagine). The chain crosses the membrane as a helical span at residues 43–63 (WLSILGFTIGCYYVIYTFYAL). N-linked (GlcNAc...) asparagine glycosylation is present at Asn92. Cys474 lines the heme pocket.

Belongs to the cytochrome P450 family. Heme is required as a cofactor.

The protein resides in the membrane. It catalyses the reaction asperaculane E + reduced [NADPH--hemoprotein reductase] + O2 = asperaculane G + oxidized [NADPH--hemoprotein reductase] + H2O + H(+). The enzyme catalyses asperaculane G + reduced [NADPH--hemoprotein reductase] + O2 = aculene D + oxidized [NADPH--hemoprotein reductase] + CO2 + 2 H2O. It carries out the reaction asperaculane E + 2 reduced [NADPH--hemoprotein reductase] + 2 O2 = aculene D + 2 oxidized [NADPH--hemoprotein reductase] + CO2 + 3 H2O + H(+). Its pathway is secondary metabolite biosynthesis. Cytochrome P450 monooxygenase; part of the gene cluster that mediates the biosynthesis of aculenes, a unique type of norsesquiterpenes that contain a nordaucane skeleton linked to an L-proline moiety and are of mixed biosynthetic origin. The pathway begins with the synthesis of dauca-4,7-diene by the terpene cyclase aneC using farnesyl pyrophosphate (FPP) as substrate. The cytochrome P450 monooxygenase aneF then performs the initial oxidation at C-12 of dauca-4,7-diene to yield asperaculane D. Asperaculane D is substrate of the cytochrome P450 monooxygenase aneD for C-10 hydroxylation to yield asperaculane E. The cytochrome P450 monooxygenase aneG then converts asperaculane E into aculene D via C-2 oxidation. The monomodular nonribosomal peptide synthtase aneB adenylates L-proline and the thiohydrolase aneE transfers this activated L-proline derivative to aculenes D and C to produce respectively aculenes B and A. The dioxygenase aneA converts aculene D into aculene C, and aculene B into aculene A by introducing the 5,6-alkene moiety. Asperculanes A, B, C and F, as well as 14-prolyl asperculane C, might be shunt products of the pathway. The chain is Cytochrome P450 monooxygenase aneG from Aspergillus aculeatus (strain ATCC 16872 / CBS 172.66 / WB 5094).